The following is a 278-amino-acid chain: Formamidopyrimidine-DNA glycosylase (278 aa).

Catalysis depends on proline 2, which acts as the Schiff-base intermediate with DNA. Residue glutamate 3 is the Proton donor of the active site. The active-site Proton donor; for beta-elimination activity is the lysine 58. Histidine 92 and arginine 111 together coordinate DNA. The segment at 239–273 (HVYGKKGVPCERCGTPIEKIKVAQRGTHFCPKCQI) adopts an FPG-type zinc-finger fold. Residue arginine 263 is the Proton donor; for delta-elimination activity of the active site.

This sequence belongs to the FPG family. Monomer. Zn(2+) is required as a cofactor.

The enzyme catalyses Hydrolysis of DNA containing ring-opened 7-methylguanine residues, releasing 2,6-diamino-4-hydroxy-5-(N-methyl)formamidopyrimidine.. It catalyses the reaction 2'-deoxyribonucleotide-(2'-deoxyribose 5'-phosphate)-2'-deoxyribonucleotide-DNA = a 3'-end 2'-deoxyribonucleotide-(2,3-dehydro-2,3-deoxyribose 5'-phosphate)-DNA + a 5'-end 5'-phospho-2'-deoxyribonucleoside-DNA + H(+). Its function is as follows. Involved in base excision repair of DNA damaged by oxidation or by mutagenic agents. Acts as a DNA glycosylase that recognizes and removes damaged bases. Has a preference for oxidized purines, such as 7,8-dihydro-8-oxoguanine (8-oxoG). Has AP (apurinic/apyrimidinic) lyase activity and introduces nicks in the DNA strand. Cleaves the DNA backbone by beta-delta elimination to generate a single-strand break at the site of the removed base with both 3'- and 5'-phosphates. The polypeptide is Formamidopyrimidine-DNA glycosylase (Latilactobacillus sakei subsp. sakei (strain 23K) (Lactobacillus sakei subsp. sakei)).